A 299-amino-acid polypeptide reads, in one-letter code: MVPTQVTIFSIIMYVLESLVIIVQSCTTVAVLFREWMHFQRLSPVETILISLGISHFCLQWTSMLYNFGTYSRPVLLFWKVSVVWEFMNILTFWLTSWLAVLYCVKVSSFTHPIFLWLRMKILKLVLWLILGALIASCLSIIPSVVKYHIQMELVTLDNLPKNNSLILRLQQFEWYFSNPLKMIGFGIPFFVFLASIILLTVSLVQHWVQMKHYSSSNSSLKAQFTVLKSLATFFTFFTSYFLTIVISFIGTVFDKKSWFWVCEAVIYGLVCIHFTSLMMSNPALKKALKLQFWSPEPS.

Residues 1–5 lie on the Extracellular side of the membrane; the sequence is MVPTQ. Residues 6-26 traverse the membrane as a helical segment; sequence VTIFSIIMYVLESLVIIVQSC. The Cytoplasmic portion of the chain corresponds to 27 to 47; sequence TTVAVLFREWMHFQRLSPVET. A helical transmembrane segment spans residues 48-68; it reads ILISLGISHFCLQWTSMLYNF. Residues 69–82 lie on the Extracellular side of the membrane; sequence GTYSRPVLLFWKVS. Residues 83 to 103 form a helical membrane-spanning segment; the sequence is VVWEFMNILTFWLTSWLAVLY. Topologically, residues 104–125 are cytoplasmic; it reads CVKVSSFTHPIFLWLRMKILKL. The chain crosses the membrane as a helical span at residues 126–146; the sequence is VLWLILGALIASCLSIIPSVV. At 147-183 the chain is on the extracellular side; it reads KYHIQMELVTLDNLPKNNSLILRLQQFEWYFSNPLKM. Asparagine 163 is a glycosylation site (N-linked (GlcNAc...) asparagine). The chain crosses the membrane as a helical span at residues 184–204; sequence IGFGIPFFVFLASIILLTVSL. Over 205–233 the chain is Cytoplasmic; the sequence is VQHWVQMKHYSSSNSSLKAQFTVLKSLAT. Residues 234 to 254 form a helical membrane-spanning segment; sequence FFTFFTSYFLTIVISFIGTVF. The Extracellular portion of the chain corresponds to 255-258; it reads DKKS. The helical transmembrane segment at 259–279 threads the bilayer; it reads WFWVCEAVIYGLVCIHFTSLM. The Cytoplasmic portion of the chain corresponds to 280-299; the sequence is MSNPALKKALKLQFWSPEPS.

Belongs to the G-protein coupled receptor T2R family. Interacts with RTP3 and RTP4.

The protein resides in the cell membrane. Functionally, gustducin-coupled receptor implicated in the perception of bitter compounds in the oral cavity and the gastrointestinal tract. Signals through PLCB2 and the calcium-regulated cation channel TRPM5. The polypeptide is Taste receptor type 2 member 16 (Tas2r16) (Mus musculus (Mouse)).